We begin with the raw amino-acid sequence, 57 residues long: uncharacterized protein (57 aa).

The tract at residues 1 to 57 is disordered; it reads MPHYVVVKSPMRRRRSPRRRSPRVCYSPRRVACSPRRRSPRRRSPRRRSPRRSIVVY. Over residues 10-22 the composition is skewed to basic residues; it reads PMRRRRSPRRRSP. The span at 23–34 shows a compositional bias: low complexity; it reads RVCYSPRRVACS. Residues 35–51 are compositionally biased toward basic residues; that stretch reads PRRRSPRRRSPRRRSPR.

This is an uncharacterized protein from Acheta domesticus (House cricket).